A 340-amino-acid polypeptide reads, in one-letter code: Proline-rich transmembrane protein 2 (340 aa).

Residues 1-261 are disordered; sequence MAASSSEISE…AGPGVEGGEG (261 aa). The Cytoplasmic portion of the chain corresponds to 1 to 268; the sequence is MAASSSEISE…GEGTQKPRDY (268 aa). The segment covering 9-18 has biased composition (basic and acidic residues); the sequence is SEMKGVEESP. Serine 28 is modified (phosphoserine). Threonine 74 is subject to Phosphothreonine. Composition is skewed to pro residues over residues 131 to 155 and 197 to 207; these read PPEPAPEPAPQPDPRPDSQPTPKPA and APEPHSPPSKK. Serine 238 is modified (phosphoserine). Arginine 240 bears the Omega-N-methylarginine mark. A phosphoserine mark is found at serine 248 and serine 249. The segment at residues 269-289 is an intramembrane region (helical); that stretch reads IILAILSCFCPMWPVNIVAFA. Over 290 to 317 the chain is Cytoplasmic; that stretch reads YAVMSRNSLQQGDVDGAQRLGRVAKLLS. A helical transmembrane segment spans residues 318–338; the sequence is IVALVGGVLIIIASCVINLGV. At 339-340 the chain is on the extracellular side; the sequence is YK.

Belongs to the CD225/Dispanin family. In terms of assembly, component of the outer core of AMPAR complex. AMPAR complex consists of an inner core made of 4 pore-forming GluA/GRIA proteins (GRIA1, GRIA2, GRIA3 and GRIA4) and 4 major auxiliary subunits arranged in a twofold symmetry. One of the two pairs of distinct binding sites is occupied either by CNIH2, CNIH3 or CACNG2, CACNG3. The other harbors CACNG2, CACNG3, CACNG4, CACNG8 or GSG1L. This inner core of AMPAR complex is complemented by outer core constituents binding directly to the GluA/GRIA proteins at sites distinct from the interaction sites of the inner core constituents. Outer core constituents include at least PRRT1, PRRT2, CKAMP44/SHISA9, FRRS1L and NRN1. The proteins of the inner and outer core serve as a platform for other, more peripherally associated AMPAR constituents. Alone or in combination, these auxiliary subunits control the gating and pharmacology of the AMPAR complex and profoundly impact their biogenesis and protein processing. Interacts with intersectin 1/ITSN1. Interacts with SNARE complex components, including SNAP25, STX1A, SYT1 and SYT2; this interaction may inhibit SNARE complex formation.

It is found in the cell membrane. Its subcellular location is the presynaptic cell membrane. The protein localises to the synapse. The protein resides in the cell projection. It localises to the axon. It is found in the cytoplasmic vesicle. Its subcellular location is the secretory vesicle. The protein localises to the synaptic vesicle membrane. The protein resides in the postsynaptic density membrane. It localises to the dendritic spine. As a component of the outer core of AMPAR complex, may be involved in synaptic transmission in the central nervous system. In hippocampal neurons, in presynaptic terminals, plays an important role in the final steps of neurotransmitter release, possibly by regulating Ca(2+)-sensing. In the cerebellum, may inhibit SNARE complex formation and down-regulate short-term facilitation. This Homo sapiens (Human) protein is Proline-rich transmembrane protein 2 (PRRT2).